The chain runs to 160 residues: Protein P5 (160 aa).

The helical transmembrane segment at Phe-7 to Ile-23 threads the bilayer.

It localises to the virion membrane. The chain is Protein P5 (V) from Pseudoalteromonas espejiana (Bacteriophage PM2).